Reading from the N-terminus, the 303-residue chain is Signal recognition particle receptor FtsY (303 aa).

Residues 108–115 (GVNGAGKT), 190–194 (DTAGR), and 254–257 (TKLD) each bind GTP.

This sequence belongs to the GTP-binding SRP family. FtsY subfamily. In terms of assembly, part of the signal recognition particle protein translocation system, which is composed of SRP and FtsY. SRP is a ribonucleoprotein composed of Ffh and a 4.5S RNA molecule.

It is found in the cell inner membrane. The protein resides in the cytoplasm. It catalyses the reaction GTP + H2O = GDP + phosphate + H(+). In terms of biological role, involved in targeting and insertion of nascent membrane proteins into the cytoplasmic membrane. Acts as a receptor for the complex formed by the signal recognition particle (SRP) and the ribosome-nascent chain (RNC). Interaction with SRP-RNC leads to the transfer of the RNC complex to the Sec translocase for insertion into the membrane, the hydrolysis of GTP by both Ffh and FtsY, and the dissociation of the SRP-FtsY complex into the individual components. This Rickettsia felis (strain ATCC VR-1525 / URRWXCal2) (Rickettsia azadi) protein is Signal recognition particle receptor FtsY.